A 123-amino-acid polypeptide reads, in one-letter code: uncharacterized protein (123 aa).

2 disordered regions span residues 1 to 33 (MAPP…RRRK) and 82 to 123 (EKAA…EDKS). Residues 18–33 (KLFKRRRVLSRDRRRK) show a composition bias toward basic residues.

This is an uncharacterized protein from Mus musculus (Mouse).